The following is an 86-amino-acid chain: U2-sicaritoxin-Li1b (86 aa).

The N-terminal stretch at 1–20 (MKIELFLVVIFALAIHMATA) is a signal peptide. A propeptide spanning residues 21–33 (EEVIESDIEPAER) is cleaved from the precursor. 4 disulfides stabilise this stretch: C35-C53, C42-C62, C52-C71, and C64-C69. K85 carries the post-translational modification Lysine amide.

The protein belongs to the neurotoxin 39 family. In terms of tissue distribution, expressed by the venom gland.

It is found in the secreted. In terms of biological role, toxin active against S.frugiperda larvae. May act on sodium channels (Nav). The protein is U2-sicaritoxin-Li1b of Loxosceles intermedia (Brown spider).